A 186-amino-acid polypeptide reads, in one-letter code: MDACVSMSENYFDEALPRLLALLNDPDPTIYRTAVKGLGVFGHGVLFPLLDLYDKTDNGTVKACCIKAFVQVAVNFPDAVFPEQAIQALKLALDDINPVVSQSALMTLGYFSKQEHEKERVIPILIQVCNSTNIAHVQSAVMSLAEIDSTEVDQCFERMINHDSTDVLIKEILEASMSRRQSLFGN.

Functionally, involved in the biosynthesis of bilin. In Synechococcus sp. (strain WH8020), this protein is Bilin biosynthesis protein CpeZ (cpeZ).